A 327-amino-acid chain; its full sequence is Sideroflexin-2 (327 aa).

The next 5 membrane-spanning stretches (helical) occupy residues 99 to 119, 143 to 163, 175 to 195, 228 to 248, and 267 to 287; these read GMLI…VVLW, VTQL…AAIG, LFQR…NIPL, EVVV…PLIM, and FQTL…CALF.

The protein belongs to the sideroflexin family.

Its subcellular location is the mitochondrion membrane. The catalysed reaction is L-serine(in) = L-serine(out). Its function is as follows. Mitochondrial amino-acid transporter that mediates transport of serine into mitochondria. The chain is Sideroflexin-2 from Drosophila melanogaster (Fruit fly).